The following is a 429-amino-acid chain: 3-phosphoshikimate 1-carboxyvinyltransferase (429 aa).

K23, S24, and R28 together coordinate 3-phosphoshikimate. Position 23 (K23) interacts with phosphoenolpyruvate. 2 residues coordinate phosphoenolpyruvate: G94 and R126. 7 residues coordinate 3-phosphoshikimate: S171, S172, Q173, S199, D316, N339, and K343. Residue Q173 participates in phosphoenolpyruvate binding. D316 serves as the catalytic Proton acceptor. Phosphoenolpyruvate-binding residues include R347, R389, and K414.

This sequence belongs to the EPSP synthase family. In terms of assembly, monomer.

It is found in the cytoplasm. It carries out the reaction 3-phosphoshikimate + phosphoenolpyruvate = 5-O-(1-carboxyvinyl)-3-phosphoshikimate + phosphate. Its pathway is metabolic intermediate biosynthesis; chorismate biosynthesis; chorismate from D-erythrose 4-phosphate and phosphoenolpyruvate: step 6/7. In terms of biological role, catalyzes the transfer of the enolpyruvyl moiety of phosphoenolpyruvate (PEP) to the 5-hydroxyl of shikimate-3-phosphate (S3P) to produce enolpyruvyl shikimate-3-phosphate and inorganic phosphate. The chain is 3-phosphoshikimate 1-carboxyvinyltransferase from Idiomarina loihiensis (strain ATCC BAA-735 / DSM 15497 / L2-TR).